We begin with the raw amino-acid sequence, 121 residues long: Large ribosomal subunit protein uL22c (121 aa).

Belongs to the universal ribosomal protein uL22 family. As to quaternary structure, part of the 50S ribosomal subunit.

It localises to the plastid. Its subcellular location is the chloroplast. In terms of biological role, this protein binds specifically to 23S rRNA. Its function is as follows. The globular domain of the protein is located near the polypeptide exit tunnel on the outside of the subunit, while an extended beta-hairpin is found that lines the wall of the exit tunnel in the center of the 70S ribosome. This Guillardia theta (Cryptophyte) protein is Large ribosomal subunit protein uL22c (rpl22).